A 147-amino-acid polypeptide reads, in one-letter code: UPF0306 protein YhbP (147 aa).

This sequence belongs to the UPF0306 family.

This Escherichia coli O6:K15:H31 (strain 536 / UPEC) protein is UPF0306 protein YhbP.